The following is a 384-amino-acid chain: Na(+)/H(+) antiporter NhaA (384 aa).

The next 11 membrane-spanning stretches (helical) occupy residues 17 to 37 (SGLF…SAIA), 53 to 73 (LEYW…GLEL), 89 to 109 (MLPI…FLVM), 118 to 138 (GAGI…SLLG), 147 to 167 (IFLT…IAVF), 171 to 191 (TLLW…LILN), 198 to 218 (LIPY…SGVH), 251 to 271 (PVAF…VLSS), 283 to 303 (IGIA…LSML), 321 to 341 (ILAV…ITLL), and 354 to 374 (FVIL…LKYV).

The protein belongs to the NhaA Na(+)/H(+) (TC 2.A.33) antiporter family.

It localises to the cell inner membrane. The catalysed reaction is Na(+)(in) + 2 H(+)(out) = Na(+)(out) + 2 H(+)(in). Na(+)/H(+) antiporter that extrudes sodium in exchange for external protons. The sequence is that of Na(+)/H(+) antiporter NhaA from Flavobacterium psychrophilum (strain ATCC 49511 / DSM 21280 / CIP 103535 / JIP02/86).